Reading from the N-terminus, the 262-residue chain is MKPLKILISNDDGVFAEGIRTLATSAASRGHKVTVVCPDQERSATGHGLTLHSPIRAEKADELFGGGIKAWGCSGTPADCVKLALNELLDQKPDLILSGINHGPNLGTDIFCSGTVAAALEGTLDGIPSIAVSVASFQWKNFSFAGKLSLDIAEKAIQQNWPKNLLLNLNIPPCEEKEMGDLVWTRLSIRQYEEQFIRRVDPRGNTYFWMAGEAVKDLQSAGEGPKGWPSDVSQIALCSPSLTPIQPDLFWRGNLDDLPNLI.

Residues aspartate 11, aspartate 12, serine 43, and asparagine 101 each contribute to the a divalent metal cation site.

The protein belongs to the SurE nucleotidase family. It depends on a divalent metal cation as a cofactor.

It localises to the cytoplasm. The enzyme catalyses a ribonucleoside 5'-phosphate + H2O = a ribonucleoside + phosphate. In terms of biological role, nucleotidase that shows phosphatase activity on nucleoside 5'-monophosphates. The protein is 5'-nucleotidase SurE of Prochlorococcus marinus (strain NATL2A).